We begin with the raw amino-acid sequence, 192 residues long: Thymidine kinase (192 aa).

ATP contacts are provided by residues 9–16 (SAMNAGKT) and 88–91 (DECH). Glutamate 89 functions as the Proton acceptor in the catalytic mechanism. The Zn(2+) site is built by cysteine 146, cysteine 148, cysteine 183, and histidine 186.

This sequence belongs to the thymidine kinase family. Homotetramer.

Its subcellular location is the cytoplasm. It catalyses the reaction thymidine + ATP = dTMP + ADP + H(+). The sequence is that of Thymidine kinase from Blochmanniella floridana.